The primary structure comprises 183 residues: Orotate phosphoribosyltransferase (183 aa).

Residues Arg-21, Lys-88, and 112–120 (EDVVTTGES) contribute to the 5-phospho-alpha-D-ribose 1-diphosphate site. Orotate contacts are provided by Thr-116 and Arg-144.

The protein belongs to the purine/pyrimidine phosphoribosyltransferase family. PyrE subfamily. As to quaternary structure, homodimer. Mg(2+) serves as cofactor.

The catalysed reaction is orotidine 5'-phosphate + diphosphate = orotate + 5-phospho-alpha-D-ribose 1-diphosphate. It participates in pyrimidine metabolism; UMP biosynthesis via de novo pathway; UMP from orotate: step 1/2. Functionally, catalyzes the transfer of a ribosyl phosphate group from 5-phosphoribose 1-diphosphate to orotate, leading to the formation of orotidine monophosphate (OMP). This is Orotate phosphoribosyltransferase from Thermus thermophilus (strain ATCC BAA-163 / DSM 7039 / HB27).